Here is a 102-residue protein sequence, read N- to C-terminus: Small ribosomal subunit protein uS10 (102 aa).

Belongs to the universal ribosomal protein uS10 family. In terms of assembly, part of the 30S ribosomal subunit.

Involved in the binding of tRNA to the ribosomes. The polypeptide is Small ribosomal subunit protein uS10 (Methanococcus maripaludis (strain C6 / ATCC BAA-1332)).